Reading from the N-terminus, the 435-residue chain is Zinc finger CCCH domain-containing protein 17 (435 aa).

Disordered stretches follow at residues 1–30 (MDIE…SSTS) and 58–107 (TAKR…GPRH). A C3H1-type 1 zinc finger spans residues 28-54 (STSGKVCIHWRAGRCNRFPCPYLHSEL). Gly residues predominate over residues 77 to 103 (SGGGGGRGAGGAGGPNKWGRGPGGADG). Residues 108-135 (KVPDRPCRYFLAGDCSYGEKCRYPHSYS) form a C3H1-type 2 zinc finger. WD repeat units lie at residues 148 to 189 (GHEK…GVIN), 191 to 225 (GREI…EMNL), 227 to 264 (GPTG…NGFE), 271 to 308 (GHQL…CIQT), 311 to 348 (DHTG…SLEV), 355 to 395 (EHGA…DRGR), and 397 to 435 (FSKQ…SQTK).

The sequence is that of Zinc finger CCCH domain-containing protein 17 from Oryza sativa subsp. japonica (Rice).